The following is a 166-amino-acid chain: Nicotine metabolites export pump subunit NepB (166 aa).

A run of 4 helical transmembrane segments spans residues 51 to 71 (LHAW…TVIL), 77 to 97 (FQLP…FFLL), 108 to 128 (VAYA…GAII), and 133 to 153 (VTLG…ILNL).

This sequence belongs to the drug/metabolite transporter (DMT) superfamily. Small multidrug resistance (SMR) (TC 2.A.7.1) family. NepA/NepB subfamily. In terms of assembly, the efflux pump is composed of NepA and NepB.

It is found in the cell membrane. Functionally, component of an efflux pump responsible for the transport of nicotine breakdown products, in particular methylamine, out of the cell. This pump apparently serves as a metabolic valve for nicotine catabolites and may protect the bacteria from the potentially toxic side effects of these compounds. The chain is Nicotine metabolites export pump subunit NepB (nepB) from Paenarthrobacter nicotinovorans (Arthrobacter nicotinovorans).